The sequence spans 89 residues: Small ribosomal subunit protein bS16 (89 aa).

The protein belongs to the bacterial ribosomal protein bS16 family.

The polypeptide is Small ribosomal subunit protein bS16 (Anaplasma marginale (strain Florida)).